The chain runs to 221 residues: Transcriptional regulatory protein QseB (221 aa).

One can recognise a Response regulatory domain in the interval 2–116 (RILLIEDDNL…EVAARLQALI (115 aa)). 4-aspartylphosphate is present on aspartate 51. Positions 124 to 218 (HSVIEQAGVK…VHGVGYALGQ (95 aa)) form a DNA-binding region, ompR/PhoB-type.

Phosphorylated by QseC.

The protein resides in the cytoplasm. Functionally, member of a two-component regulatory system QseB/QseC. The protein is Transcriptional regulatory protein QseB (qseB) of Haemophilus influenzae (strain ATCC 51907 / DSM 11121 / KW20 / Rd).